The chain runs to 413 residues: MQKVMNDPEDLGNCKICLQRADGIHFAVSSCRACAAFFRRTVILKLNYTCKEKGNCTVEKSLRNLCRSCRYTRCINEGMKIELVQLQRDSIGRKKSGASISIDPLFTPNVASSLSAIFKNEKEDVLSTSCTILSQMTSGYAMFLNIRRSTNTLVQSSVITPTFKMPKIELHASRFDSAKQVCKAEAHLVTDIVNSYFSPFNSLKFEDKVALFKNFFCYFSHTDRAYQSFKQFESDNLNDKILMPDGGFIKRTELGRFYENAEGVHTSAEDAAKIFQPALNYILDVIVDYMRRIHIIETEYLALLGFCLWDDAVPGLSKEAKSLAVQTQSKLLAELQNFYSSQNKDAVEITQRVGVLLLLVPKLTKCVIMLRENSVLAELFNYYEADVCCKNFKEDASVDLDCTSQCIVHTKND.

The nuclear receptor DNA-binding region spans 11 to 86 (LGNCKICLQR…EGMKIELVQL (76 aa)). NR C4-type zinc fingers lie at residues 14-34 (CKIC…CRAC) and 50-69 (CKEK…CRSC). The segment at 101–412 (SIDPLFTPNV…TSQCIVHTKN (312 aa)) is required for zinc-binding. The 262-residue stretch at 135–396 (QMTSGYAMFL…VCCKNFKEDA (262 aa)) folds into the NR LBD domain.

Belongs to the nuclear hormone receptor family. In terms of tissue distribution, weakly expressed in intestinal cells in the absence of zinc supplementation. Upon zinc supplementation, accumulates in alimentary tract cells, and it is mainly expressed in the intestine.

It is found in the nucleus. It localises to the cytoplasm. In terms of biological role, nuclear receptor transcription factor that binds to DNA enhancer elements to promote the transcription of genes required to maintain micronutrient homeostasis. Direct binding to its ligand zinc allows for nuclear accumulation and activation, which thereby induces the transcription of genes required to promote the storage and detoxification of excess dietary zinc. This in turn, allows for internal zinc levels to be detected and regulated. The polypeptide is High zinc activated nuclear receptor protein (Caenorhabditis elegans).